Consider the following 359-residue polypeptide: Eukaryotic translation initiation factor 3 subunit H (359 aa).

The MPN domain maps to 13-160; sequence VQVEALVVMK…LRAFKLSPEF (148 aa).

Belongs to the eIF-3 subunit H family. In terms of assembly, component of the eukaryotic translation initiation factor 3 (eIF-3) complex.

It is found in the cytoplasm. Its function is as follows. Component of the eukaryotic translation initiation factor 3 (eIF-3) complex, which is involved in protein synthesis of a specialized repertoire of mRNAs and, together with other initiation factors, stimulates binding of mRNA and methionyl-tRNAi to the 40S ribosome. The eIF-3 complex specifically targets and initiates translation of a subset of mRNAs involved in cell proliferation. This chain is Eukaryotic translation initiation factor 3 subunit H (eif3h), found in Neurospora crassa (strain ATCC 24698 / 74-OR23-1A / CBS 708.71 / DSM 1257 / FGSC 987).